A 61-amino-acid polypeptide reads, in one-letter code: Large ribosomal subunit protein uL30 (61 aa).

This sequence belongs to the universal ribosomal protein uL30 family. As to quaternary structure, part of the 50S ribosomal subunit.

In Fervidobacterium nodosum (strain ATCC 35602 / DSM 5306 / Rt17-B1), this protein is Large ribosomal subunit protein uL30.